Here is a 280-residue protein sequence, read N- to C-terminus: Dual adapter for phosphotyrosine and 3-phosphotyrosine and 3-phosphoinositide (280 aa).

The segment at 1-20 is disordered; sequence MGRAELLEGKMSTQDPSDLW. An SH2 domain is found at 35–129; it reads WYHGNLTRHA…GTLMVLKHPY (95 aa). Tyr139 carries the phosphotyrosine modification. Position 141 is a phosphoserine (Ser141). The PH domain maps to 164 to 259; that stretch reads LGTKEGYLTK…WIKILRWKLS (96 aa).

In terms of assembly, interacts with PtdIns(3,4,5)P3 and PLCG2. In vitro, interacts with PtdIns(3,4)P2. Post-translationally, phosphorylated on tyrosine residues. Highly expressed in placenta and lung, followed by brain, heart, kidney, liver, pancreas and skeletal muscle. Expressed by B-lymphocytes, but not T-lymphocytes or nonhematopoietic cells.

The protein localises to the cytoplasm. It localises to the membrane. Its function is as follows. May act as a B-cell-associated adapter that regulates B-cell antigen receptor (BCR)-signaling downstream of PI3K. This chain is Dual adapter for phosphotyrosine and 3-phosphotyrosine and 3-phosphoinositide (DAPP1), found in Homo sapiens (Human).